The primary structure comprises 681 residues: Sodium-dependent phosphate transporter 1 (681 aa).

Transmembrane regions (helical) follow at residues 25-45, 66-86, 106-126, 162-182, 201-221, and 234-254; these read NLWM…SVGA, ACIL…AKVS, LMAG…VASF, IVMS…ILFF, ALPI…MYTG, and GTIL…WFFV. Positions 266-295 are disordered; that stretch reads VKSSPSESPLMEKKNNLKDHEETKMAPGDV. A phosphoserine mark is found at serine 269 and serine 273. Positions 275–289 are enriched in basic and acidic residues; that stretch reads LMEKKNNLKDHEETK. 4 helical membrane passes run 513-533, 561-581, 602-622, and 652-672; these read VSLL…FAHG, ATPI…LWVW, FSIE…GLPI, and IFMA…AIMA.

It belongs to the inorganic phosphate transporter (PiT) (TC 2.A.20) family. In terms of tissue distribution, ubiquitously expressed.

Its subcellular location is the cell membrane. The enzyme catalyses 2 Na(+)(out) + phosphate(out) = 2 Na(+)(in) + phosphate(in). Sodium-phosphate symporter which preferentially transports the monovalent form of phosphate with a stoichiometry of two sodium ions per phosphate ion. May play a role in extracellular matrix and cartilage calcification as well as in vascular calcification. Essential for cell proliferation but this function is independent of its phosphate transporter activity. The polypeptide is Sodium-dependent phosphate transporter 1 (Slc20a1) (Rattus norvegicus (Rat)).